Reading from the N-terminus, the 102-residue chain is Antimicrobial peptide 1 (102 aa).

The signal sequence occupies residues 1 to 26 (MASTKLFFSVITVMMLIAMASEMVNG). Disulfide bonds link Cys37-Cys90, Cys47-Cys102, and Cys49-Cys75.

Its subcellular location is the secreted. In terms of biological role, antimicrobial peptide which inhibits the growth of a variety of fungi, oomycetes, Gram-positive bacterial phytopatogenes and S.cerevisiae in vitro. No activity against E.coli. The sequence is that of Antimicrobial peptide 1 from Macadamia integrifolia (Macadamia nut).